Consider the following 477-residue polypeptide: FAD-dependent monooxygenase paxM (477 aa).

Residues 4-24 (AEFQVIIVGGSIGGLTLAHCL) form a helical membrane-spanning segment. FAD-binding residues include E35, G49, and R108. The active site involves R195. Residues D308 and A321 each contribute to the FAD site. A helical transmembrane segment spans residues 446-466 (LMIYLFGLTIVYTSLTMMFDL).

It belongs to the paxM FAD-dependent monooxygenase family. FAD serves as cofactor.

It is found in the membrane. Its pathway is secondary metabolite biosynthesis. In terms of biological role, FAD-dependent monooxygenase; part of the gene cluster that mediates the biosynthesis of paxilline, a mycotoxin that acts as an inhibitor of mammalian maxi-K channels. PaxG, the geranylgeranyl diphosphate (GGPP) synthase is proposed to catalyze the first step in paxilline biosynthesis. Condensation of indole-3-glycerol phosphate with GGPP by paxC then forms 3-geranylgeranylindole (3-GGI), followed by epoxidation and cyclization of this intermediate (by paxM and paxB) to form paspaline. Paspaline is subsequently converted to 13-desoxypaxilline by paxP, the latter being then converted to paxilline by paxQ. Finally paxilline can be mono- and di-prenylated by paxD. The polypeptide is FAD-dependent monooxygenase paxM (Penicillium paxilli).